The sequence spans 233 residues: Enolase-phosphatase E1 (233 aa).

Residues Asp-16 and Glu-18 each contribute to the Mg(2+) site. Substrate is bound by residues 131–132 (SS) and Lys-167. Position 193 (Asp-193) interacts with Mg(2+).

This sequence belongs to the HAD-like hydrolase superfamily. MasA/MtnC family. As to quaternary structure, monomer. Mg(2+) is required as a cofactor.

Its subcellular location is the cytoplasm. It is found in the nucleus. The enzyme catalyses 5-methylsulfanyl-2,3-dioxopentyl phosphate + H2O = 1,2-dihydroxy-5-(methylsulfanyl)pent-1-en-3-one + phosphate. The protein operates within amino-acid biosynthesis; L-methionine biosynthesis via salvage pathway; L-methionine from S-methyl-5-thio-alpha-D-ribose 1-phosphate: step 3/6. It participates in amino-acid biosynthesis; L-methionine biosynthesis via salvage pathway; L-methionine from S-methyl-5-thio-alpha-D-ribose 1-phosphate: step 4/6. Its function is as follows. Bifunctional enzyme that catalyzes the enolization of 2,3-diketo-5-methylthiopentyl-1-phosphate (DK-MTP-1-P) into the intermediate 2-hydroxy-3-keto-5-methylthiopentenyl-1-phosphate (HK-MTPenyl-1-P), which is then dephosphorylated to form the acireductone 1,2-dihydroxy-3-keto-5-methylthiopentene (DHK-MTPene). The chain is Enolase-phosphatase E1 from Meyerozyma guilliermondii (strain ATCC 6260 / CBS 566 / DSM 6381 / JCM 1539 / NBRC 10279 / NRRL Y-324) (Yeast).